The chain runs to 72 residues: Translation initiation factor IF-1 (72 aa).

Positions 1-72 (MSKEEAIEVE…TRGRITYRAK (72 aa)) constitute an S1-like domain.

It belongs to the IF-1 family. Component of the 30S ribosomal translation pre-initiation complex which assembles on the 30S ribosome in the order IF-2 and IF-3, IF-1 and N-formylmethionyl-tRNA(fMet); mRNA recruitment can occur at any time during PIC assembly.

It localises to the cytoplasm. One of the essential components for the initiation of protein synthesis. Stabilizes the binding of IF-2 and IF-3 on the 30S subunit to which N-formylmethionyl-tRNA(fMet) subsequently binds. Helps modulate mRNA selection, yielding the 30S pre-initiation complex (PIC). Upon addition of the 50S ribosomal subunit IF-1, IF-2 and IF-3 are released leaving the mature 70S translation initiation complex. The chain is Translation initiation factor IF-1 from Geobacter sulfurreducens (strain ATCC 51573 / DSM 12127 / PCA).